The primary structure comprises 465 residues: Argininosuccinate lyase (465 aa).

This sequence belongs to the lyase 1 family. Argininosuccinate lyase subfamily.

The protein localises to the cytoplasm. It carries out the reaction 2-(N(omega)-L-arginino)succinate = fumarate + L-arginine. It functions in the pathway amino-acid biosynthesis; L-arginine biosynthesis; L-arginine from L-ornithine and carbamoyl phosphate: step 3/3. This is Argininosuccinate lyase from Rhodopseudomonas palustris (strain ATCC BAA-98 / CGA009).